Reading from the N-terminus, the 429-residue chain is Probable M18 family aminopeptidase 2 (429 aa).

Zn(2+)-binding residues include His82, His156, and His401.

Belongs to the peptidase M18 family. Zn(2+) serves as cofactor.

The protein is Probable M18 family aminopeptidase 2 of Pseudomonas putida (strain ATCC 700007 / DSM 6899 / JCM 31910 / BCRC 17059 / LMG 24140 / F1).